Here is a 522-residue protein sequence, read N- to C-terminus: MQLTLWTYEGPPHVGAMRIAASMKGVHYVLHAPQGDTYADLLFTMIERRDQRPPVTYTTFQARDLGGDTAELVKRHVREAVDRFQPDALLVGESCTAELIQDQPGALAAGMGLTMPIVNLELPAYSKKENWGAAETFYQLVRTLLKDQAPAELNHDPKAWQHEGRRPRVNLLGPSLLGFRCRDDVLEIQRLLNMHGIDVGVVAPLGATVADVHRLPEADLNVCLYPEIAESSCAWLERSFGIPFTTTVPIGIGATHDFLVEVHNLLGMTPPSPQEGIRQSRLPWYSESVDSTYLTGKRVFIFGDGTHALAAARICKEELGFEVVGLGTYSREMARPVRAAAKAMGIEALISDDYLAVEAAMAAAAPELVLGTQMERHSAKRLGLPCAVISTPMHVQDVPARNSPQMGWEGANVIFDSWVHPLMMGLEEHLIGMFRHDFEFVDGHQSHLGHSGGSGAIADTEVAVSTLTDELVWTAEGEAELKKIPFFVRGKVRRNTEAFAKSTGRNQIDSETLYDAKAHFSA.

Residue aspartate 36 coordinates [4Fe-4S] cluster. Aspartate 290 acts as the Proton donor in catalysis. 425–426 (GL) contributes to the substrate binding site.

It belongs to the ChlB/BchB/BchZ family. As to quaternary structure, protochlorophyllide reductase is composed of three subunits; ChlL, ChlN and ChlB. Forms a heterotetramer of two ChlB and two ChlN subunits. [4Fe-4S] cluster is required as a cofactor.

The enzyme catalyses chlorophyllide a + oxidized 2[4Fe-4S]-[ferredoxin] + 2 ADP + 2 phosphate = protochlorophyllide a + reduced 2[4Fe-4S]-[ferredoxin] + 2 ATP + 2 H2O. Its pathway is porphyrin-containing compound metabolism; chlorophyll biosynthesis (light-independent). In terms of biological role, component of the dark-operative protochlorophyllide reductase (DPOR) that uses Mg-ATP and reduced ferredoxin to reduce ring D of protochlorophyllide (Pchlide) to form chlorophyllide a (Chlide). This reaction is light-independent. The NB-protein (ChlN-ChlB) is the catalytic component of the complex. The polypeptide is Light-independent protochlorophyllide reductase subunit B (Synechococcus sp. (strain CC9311)).